Reading from the N-terminus, the 306-residue chain is uncharacterized protein (306 aa).

The protein to L.delbrueckii similar ORF in glnA 5'region.

This is an uncharacterized protein from Lactobacillus delbrueckii subsp. bulgaricus.